Here is a 571-residue protein sequence, read N- to C-terminus: Plastidial pyruvate kinase 3, chloroplastic (571 aa).

Residues 1-55 constitute a chloroplast transit peptide; sequence MAAYGQISSGMTVDPQVLSSSRNIGVSLSPLRRTLIGAGVRSTSISLRQCSLSVR. Arg-129 is a binding site for substrate. The K(+) site is built by Asn-131, Ser-133, Asp-164, and Thr-165. Residue 131 to 134 coordinates ATP; the sequence is NMSH. Residue Arg-171 participates in ATP binding. Lys-314 contacts substrate. Residue Glu-316 participates in Mg(2+) binding. Residues Gly-339, Asp-340, and Thr-372 each coordinate substrate. Asp-340 provides a ligand contact to Mg(2+).

The protein belongs to the pyruvate kinase family. Oligomer of alpha and beta subunits. It depends on Mg(2+) as a cofactor. K(+) is required as a cofactor. In terms of tissue distribution, expressed at low levels in roots, leaves, inflorescences, siliques, pollen, seeds and flowers.

The protein localises to the plastid. It localises to the chloroplast stroma. It catalyses the reaction pyruvate + ATP = phosphoenolpyruvate + ADP + H(+). It participates in carbohydrate degradation; glycolysis; pyruvate from D-glyceraldehyde 3-phosphate: step 5/5. Its function is as follows. Required for plastidial pyruvate kinase activity. This Arabidopsis thaliana (Mouse-ear cress) protein is Plastidial pyruvate kinase 3, chloroplastic (PKP3).